A 256-amino-acid chain; its full sequence is Lysine-rich coiled-coil protein 1 (256 aa).

2 disordered regions span residues 61 to 83 and 141 to 256; these read QRIP…TEDR and GHST…ILGF. Composition is skewed to polar residues over residues 64–79 and 141–153; these read PSGT…SSSQ and GHST…SHRQ. Composition is skewed to basic and acidic residues over residues 161–188 and 218–227; these read HLEE…DLNK and KNRDVSSKKE. Residues 208-247 adopt a coiled-coil conformation; sequence TEKLKNRKEKKNRDVSSKKEDRKRRKEKKEQGEERTEEEM.

This chain is Lysine-rich coiled-coil protein 1 (Krcc1), found in Rattus norvegicus (Rat).